The primary structure comprises 1704 residues: Nonribosomal peptide synthetase ivoA (1704 aa).

The adenylation stretch occupies residues 234-620 (EEQAIARPDQ…HGRKDLEVKI (387 aa)). The Carrier domain occupies 748 to 827 (NLISDPSDSM…EMATKTSAVE (80 aa)). S785 is modified (O-(pantetheine 4'-phosphoryl)serine). The segment at 840-1266 (FPLSPVQQMY…QELLETAVER (427 aa)) is epimerization (E) domain. Residues 1325–1477 (VQGDWTIEKT…AQSSTPSARK (153 aa)) form a condensation region.

Belongs to the NRP synthetase family.

The enzyme catalyses L-tryptophan + ATP + H2O = D-tryptophan + AMP + diphosphate + H(+). The protein operates within pigment biosynthesis. Its function is as follows. Nonribosomal peptide synthetase; part of the pathway that mediates the biosynthesis of the gray-brown conidiophore pigment. The first step of the pathway is performed by the nonribosomal peptide synthetase ivoA that catalyzes ATP-dependent unidirectional stereoinversion of L-tryptophan to D-tryptophan with complete conversion. While the stereoinversion is catalyzed by the epimerization (E) domain of ivoA, the terminal condensation (C) domain stereoselectively hydrolyzes D-tryptophanyl-S-phosphopantetheine thioester and thus represents a non-canonical C domain function. D-tryptophan is acetylated, probably by an endogenous acetyltransferase. N-acetyltryptophan is further 6-hydroxylated into N-acetyl-6-hydroxytryptophan (AHT) by the cytochrome P450 monooxygenase ivoC. N-acetyl-6-hydroxytryptophan is substrate of the N-acetyl-6-hydroxytryptophan oxidase ivoB to produce the gray-brown conidiophore pigment. This chain is Nonribosomal peptide synthetase ivoA, found in Emericella nidulans (strain FGSC A4 / ATCC 38163 / CBS 112.46 / NRRL 194 / M139) (Aspergillus nidulans).